Reading from the N-terminus, the 495-residue chain is UDP-N-acetylmuramoyl-L-alanyl-D-glutamate--2,6-diaminopimelate ligase (495 aa).

UDP-N-acetyl-alpha-D-muramoyl-L-alanyl-D-glutamate-binding positions include leucine 27, serine 29, and 44–46; that span reads HQA. 116 to 122 serves as a coordination point for ATP; sequence GTNGKTT. Residues asparagine 157, 158–159, serine 185, glutamine 191, and arginine 193 each bind UDP-N-acetyl-alpha-D-muramoyl-L-alanyl-D-glutamate; that span reads TT. Lysine 225 carries the N6-carboxylysine modification. Residues arginine 390, 414–417, glycine 465, and glutamate 469 each bind meso-2,6-diaminopimelate; that span reads DNPR. The Meso-diaminopimelate recognition motif motif lies at 414–417; the sequence is DNPR.

This sequence belongs to the MurCDEF family. MurE subfamily. The cofactor is Mg(2+). In terms of processing, carboxylation is probably crucial for Mg(2+) binding and, consequently, for the gamma-phosphate positioning of ATP.

The protein localises to the cytoplasm. It catalyses the reaction UDP-N-acetyl-alpha-D-muramoyl-L-alanyl-D-glutamate + meso-2,6-diaminopimelate + ATP = UDP-N-acetyl-alpha-D-muramoyl-L-alanyl-gamma-D-glutamyl-meso-2,6-diaminopimelate + ADP + phosphate + H(+). Its pathway is cell wall biogenesis; peptidoglycan biosynthesis. Its function is as follows. Catalyzes the addition of meso-diaminopimelic acid to the nucleotide precursor UDP-N-acetylmuramoyl-L-alanyl-D-glutamate (UMAG) in the biosynthesis of bacterial cell-wall peptidoglycan. The sequence is that of UDP-N-acetylmuramoyl-L-alanyl-D-glutamate--2,6-diaminopimelate ligase from Salmonella choleraesuis (strain SC-B67).